Here is a 244-residue protein sequence, read N- to C-terminus: 1-(5-phosphoribosyl)-5-[(5-phosphoribosylamino)methylideneamino] imidazole-4-carboxamide isomerase (244 aa).

Catalysis depends on Asp-8, which acts as the Proton acceptor. Asp-130 serves as the catalytic Proton donor.

Belongs to the HisA/HisF family.

Its subcellular location is the cytoplasm. It catalyses the reaction 1-(5-phospho-beta-D-ribosyl)-5-[(5-phospho-beta-D-ribosylamino)methylideneamino]imidazole-4-carboxamide = 5-[(5-phospho-1-deoxy-D-ribulos-1-ylimino)methylamino]-1-(5-phospho-beta-D-ribosyl)imidazole-4-carboxamide. It functions in the pathway amino-acid biosynthesis; L-histidine biosynthesis; L-histidine from 5-phospho-alpha-D-ribose 1-diphosphate: step 4/9. This chain is 1-(5-phosphoribosyl)-5-[(5-phosphoribosylamino)methylideneamino] imidazole-4-carboxamide isomerase, found in Hahella chejuensis (strain KCTC 2396).